The primary structure comprises 563 residues: Eukaryotic translation initiation factor 3 subunit D (563 aa).

The segment at 95–136 is disordered; the sequence is PGYMRNRNRFNQRGGYRRDNRGGRFQGQGGNMGMQNLSRGRD. The segment at 294 to 308 is RNA gate; it reads EFDLLTVGETANDLN. Positions 528–563 are disordered; the sequence is IPNSTFETDEEDDDDDEDDVENDDGDDEKDEGDGED. The span at 534–563 shows a compositional bias: acidic residues; it reads ETDEEDDDDDEDDVENDDGDDEKDEGDGED.

This sequence belongs to the eIF-3 subunit D family. In terms of assembly, component of the eukaryotic translation initiation factor 3 (eIF-3) complex.

The protein resides in the cytoplasm. Its function is as follows. mRNA cap-binding component of the eukaryotic translation initiation factor 3 (eIF-3) complex, which is involved in protein synthesis of a specialized repertoire of mRNAs and, together with other initiation factors, stimulates binding of mRNA and methionyl-tRNAi to the 40S ribosome. The eIF-3 complex specifically targets and initiates translation of a subset of mRNAs involved in cell proliferation. In the eIF-3 complex, eif3d specifically recognizes and binds the 7-methylguanosine cap of a subset of mRNAs. This chain is Eukaryotic translation initiation factor 3 subunit D, found in Nematostella vectensis (Starlet sea anemone).